A 185-amino-acid polypeptide reads, in one-letter code: Adenylate kinase (185 aa).

Residue 8–16 (GIPGSGSTT) participates in ATP binding.

This sequence belongs to the archaeal adenylate kinase family.

It localises to the cytoplasm. It carries out the reaction AMP + ATP = 2 ADP. The protein is Adenylate kinase (adkA) of Methanothermobacter thermautotrophicus (strain ATCC 29096 / DSM 1053 / JCM 10044 / NBRC 100330 / Delta H) (Methanobacterium thermoautotrophicum).